The primary structure comprises 353 residues: Guanine nucleotide-binding protein alpha-1 subunit (353 aa).

Gly-2 carries the N-myristoyl glycine lipid modification. Residue Cys-3 is the site of S-palmitoyl cysteine attachment. Residues 32 to 353 (NEIKMLLLGA…QVNLRDCGLL (322 aa)) form the G-alpha domain. Residues 35 to 48 (KMLLLGAGESGKST) are G1 motif. GTP is bound by residues Glu-43, Ser-44, Gly-45, Lys-46, Ser-47, Thr-48, Asp-150, Leu-175, Thr-181, Gly-203, Asn-269, Lys-270, Asp-272, and Ala-325. Ser-47 contacts Mg(2+). The segment at 173-181 (DVLRSRVKT) is G2 motif. Thr-181 is a Mg(2+) binding site. Residues 196–205 (YKLFDVGGQR) form a G3 motif region. The segment at 265–272 (ILFLNKID) is G4 motif. The interval 323–328 (TCATDT) is G5 motif.

This sequence belongs to the G-alpha family. In terms of assembly, g proteins are composed of 3 units; alpha, beta and gamma. The alpha chain contains the guanine nucleotide binding site. Requires Mg(2+) as cofactor.

Its function is as follows. Guanine nucleotide-binding proteins (G proteins) are involved as modulators or transducers in various transmembrane signaling systems. This Mycosarcoma maydis (Corn smut fungus) protein is Guanine nucleotide-binding protein alpha-1 subunit (GPA1).